A 409-amino-acid polypeptide reads, in one-letter code: Elongation factor Tu (409 aa).

The tr-type G domain occupies 10-214; sequence KPHVNIGTIG…EVDGYIPQPE (205 aa). The tract at residues 19–26 is G1; the sequence is GHVDHGKT. Position 19–26 (19–26) interacts with GTP; it reads GHVDHGKT. Threonine 26 provides a ligand contact to Mg(2+). Residues 60 to 64 form a G2 region; it reads GITIN. The G3 stretch occupies residues 81-84; the sequence is DCPG. GTP-binding positions include 81–85 and 136–139; these read DCPGH and NKQD. The segment at 136 to 139 is G4; it reads NKQD. Residues 174-176 are G5; it reads SAL.

The protein belongs to the TRAFAC class translation factor GTPase superfamily. Classic translation factor GTPase family. EF-Tu/EF-1A subfamily. Monomer.

The protein resides in the cytoplasm. It carries out the reaction GTP + H2O = GDP + phosphate + H(+). Functionally, GTP hydrolase that promotes the GTP-dependent binding of aminoacyl-tRNA to the A-site of ribosomes during protein biosynthesis. The chain is Elongation factor Tu from Trichodesmium erythraeum (strain IMS101).